The sequence spans 729 residues: Catalase-peroxidase (729 aa).

The disordered stretch occupies residues 1–26 (MTMDQKTDNAGKCPVAHTAPRGRSNR). The segment at residues 97 to 219 (WHSAGTYRIT…LAAVQMGLIY (123 aa)) is a cross-link (tryptophyl-tyrosyl-methioninium (Trp-Tyr) (with M-245)). The active-site Proton acceptor is the histidine 98. Residues 219–245 (YVNPEGPNGNPDPVAAAHDIRETFARM) constitute a cross-link (tryptophyl-tyrosyl-methioninium (Tyr-Met) (with W-97)). A heme b-binding site is contributed by histidine 260.

Belongs to the peroxidase family. Peroxidase/catalase subfamily. In terms of assembly, homodimer or homotetramer. Heme b serves as cofactor. In terms of processing, formation of the three residue Trp-Tyr-Met cross-link is important for the catalase, but not the peroxidase activity of the enzyme.

The enzyme catalyses H2O2 + AH2 = A + 2 H2O. It carries out the reaction 2 H2O2 = O2 + 2 H2O. In terms of biological role, bifunctional enzyme with both catalase and broad-spectrum peroxidase activity. The protein is Catalase-peroxidase of Sinorhizobium medicae (strain WSM419) (Ensifer medicae).